The following is a 355-amino-acid chain: Protein pelota homolog (355 aa).

This sequence belongs to the eukaryotic release factor 1 family. Pelota subfamily. Monomer. It depends on a divalent metal cation as a cofactor.

The protein resides in the cytoplasm. In terms of biological role, may function in recognizing stalled ribosomes, interact with stem-loop structures in stalled mRNA molecules, and effect endonucleolytic cleavage of the mRNA. May play a role in the release non-functional ribosomes and degradation of damaged mRNAs. Has endoribonuclease activity. In Natronomonas pharaonis (strain ATCC 35678 / DSM 2160 / CIP 103997 / JCM 8858 / NBRC 14720 / NCIMB 2260 / Gabara) (Halobacterium pharaonis), this protein is Protein pelota homolog.